Here is a 747-residue protein sequence, read N- to C-terminus: 3',5'-cyclic-AMP phosphodiesterase 4D (747 aa).

The tract at residues 1-28 (MERDTCDVLSRSKSASEETLHSCNEEED) is disordered. The segment covering 14 to 24 (SASEETLHSCN) has biased composition (basic and acidic residues). 4 positions are modified to phosphoserine: Ser238, Ser240, Ser287, and Ser314. A disordered region spans residues 282-302 (EVEIPSPTQKEKEKKKRPMSQ). A PDEase domain is found at 325-654 (VKTEQEDVLA…EWYQSTIPQS (330 aa)). Residue Lys326 forms a Glycyl lysine isopeptide (Lys-Gly) (interchain with G-Cter in SUMO) linkage. Catalysis depends on His401, which acts as the Proton donor. 3',5'-cyclic AMP is bound at residue His401. His401 lines the AMP pocket. The Zn(2+) site is built by His405, His441, Asp442, and Asp559. AMP is bound by residues Asp442, Asp559, Asn562, Gln610, and Phe613. Mg(2+) is bound at residue Asp442. Residue Asp442 coordinates Mn(2+). Residues Gln610 and Phe613 each contribute to the 3',5'-cyclic AMP site. Positions 649–747 (STIPQSPSPA…CVPDDCCPDT (99 aa)) are disordered. A compositionally biased stretch (polar residues) spans 701-712 (CSDSKTLCTQDS). Acidic residues predominate over residues 718–734 (PLDEQVEEEAVAEEESQ).

Belongs to the cyclic nucleotide phosphodiesterase family. PDE4 subfamily. In terms of assembly, homodimer for the long isoforms. Isoforms with truncated N-termini are monomeric. Binds ARRB2. Interacts with PDE4DIP. Identified in a complex composed of RYR1, PDE4D, PKA, FKBP1A and protein phosphatase 1 (PP1). Interacts (via N-terminal region) with SHANK2 (via proline-rich region); the interaction is increased in a PKA-dependent manner. The cofactor is Zn(2+). It depends on Mg(2+) as a cofactor. Mn(2+) serves as cofactor. Sumoylation of long isoforms by PIAS4 augments their activation by PKA phosphorylation and represses their inhibition by ERK phosphorylation. Expressed in brain (at protein level). Isoform 7 is detected in heart, brain, lung, kidney and testis.

It localises to the cytoplasm. The protein resides in the membrane. The protein localises to the cytoskeleton. Its subcellular location is the microtubule organizing center. It is found in the centrosome. It localises to the apical cell membrane. The catalysed reaction is 3',5'-cyclic AMP + H2O = AMP + H(+). Its pathway is purine metabolism; 3',5'-cyclic AMP degradation; AMP from 3',5'-cyclic AMP: step 1/1. Inhibited by rolipram. Activated by phosphatidic acid. Hydrolyzes the second messenger cAMP, which is a key regulator of many important physiological processes. The polypeptide is 3',5'-cyclic-AMP phosphodiesterase 4D (Pde4d) (Mus musculus (Mouse)).